The following is a 57-amino-acid chain: MPAIQPPLYLTFLLLILLYRIITLYVWIILTITYKTSVRHAALHQRSFFRWSFDHSL.

At 1-8 (MPAIQPPL) the chain is on the virion surface side. A helical transmembrane segment spans residues 9-29 (YLTFLLLILLYRIITLYVWII). Residues 30 to 57 (LTITYKTSVRHAALHQRSFFRWSFDHSL) are Intravirion-facing.

This sequence belongs to the rubulavirus small hydrophobic protein family. In terms of assembly, interacts with host TNFRSF1A, RIPK1 and IRAK1; these interactions interfere with host NF-kappa-B activation at the level of receptor complexes. Interacts with host protein UBQLN4.

Its subcellular location is the virion membrane. The protein resides in the host cell membrane. In terms of biological role, plays a role in the inhibition of the host NF-kappa-B pathway. This inhibition occurs at the receptor level, by preventing the signaling of TNFR1 as well as IL-1R and TLR3. The chain is Small hydrophobic protein (SH) from Homo sapiens (Human).